The primary structure comprises 428 residues: Histidinol dehydrogenase (428 aa).

NAD(+)-binding residues include Tyr-129, Gln-188, and Asn-211. Substrate is bound by residues Ser-234, Gln-256, and His-259. Residues Gln-256 and His-259 each coordinate Zn(2+). Catalysis depends on proton acceptor residues Glu-323 and His-324. Substrate contacts are provided by His-324, Asp-357, Glu-411, and His-416. Position 357 (Asp-357) interacts with Zn(2+). His-416 provides a ligand contact to Zn(2+).

Belongs to the histidinol dehydrogenase family. Zn(2+) is required as a cofactor.

It carries out the reaction L-histidinol + 2 NAD(+) + H2O = L-histidine + 2 NADH + 3 H(+). The protein operates within amino-acid biosynthesis; L-histidine biosynthesis; L-histidine from 5-phospho-alpha-D-ribose 1-diphosphate: step 9/9. Functionally, catalyzes the sequential NAD-dependent oxidations of L-histidinol to L-histidinaldehyde and then to L-histidine. The chain is Histidinol dehydrogenase from Caulobacter vibrioides (strain ATCC 19089 / CIP 103742 / CB 15) (Caulobacter crescentus).